Here is a 232-residue protein sequence, read N- to C-terminus: Thiamine import ATP-binding protein ThiQ (232 aa).

Residues 2–230 enclose the ABC transporter domain; the sequence is LKLTDITWLY…KASASALLGI (229 aa). 32–39 serves as a coordination point for ATP; the sequence is GPSGAGKS.

Belongs to the ABC transporter superfamily. Thiamine importer (TC 3.A.1.19.1) family. The complex is composed of two ATP-binding proteins (ThiQ), two transmembrane proteins (ThiP) and a solute-binding protein (ThiB).

The protein localises to the cell inner membrane. The catalysed reaction is thiamine(out) + ATP + H2O = thiamine(in) + ADP + phosphate + H(+). Its function is as follows. Part of the ABC transporter complex ThiBPQ involved in thiamine import. Responsible for energy coupling to the transport system. This Escherichia coli (strain K12) protein is Thiamine import ATP-binding protein ThiQ.